The following is a 264-amino-acid chain: Thymidylate synthase (264 aa).

Position 21 (Arg21) interacts with dUMP. His51 serves as a coordination point for (6R)-5,10-methylene-5,6,7,8-tetrahydrofolate. 126–127 (RR) contributes to the dUMP binding site. The Nucleophile role is filled by Cys146. DUMP contacts are provided by residues 166 to 169 (RSAD), Asn177, and 207 to 209 (HIY). Residue Asp169 coordinates (6R)-5,10-methylene-5,6,7,8-tetrahydrofolate. Position 263 (Ala263) interacts with (6R)-5,10-methylene-5,6,7,8-tetrahydrofolate.

This sequence belongs to the thymidylate synthase family. Bacterial-type ThyA subfamily. As to quaternary structure, homodimer.

Its subcellular location is the cytoplasm. The catalysed reaction is dUMP + (6R)-5,10-methylene-5,6,7,8-tetrahydrofolate = 7,8-dihydrofolate + dTMP. It functions in the pathway pyrimidine metabolism; dTTP biosynthesis. Its function is as follows. Catalyzes the reductive methylation of 2'-deoxyuridine-5'-monophosphate (dUMP) to 2'-deoxythymidine-5'-monophosphate (dTMP) while utilizing 5,10-methylenetetrahydrofolate (mTHF) as the methyl donor and reductant in the reaction, yielding dihydrofolate (DHF) as a by-product. This enzymatic reaction provides an intracellular de novo source of dTMP, an essential precursor for DNA biosynthesis. In Bacteroides fragilis (strain ATCC 25285 / DSM 2151 / CCUG 4856 / JCM 11019 / LMG 10263 / NCTC 9343 / Onslow / VPI 2553 / EN-2), this protein is Thymidylate synthase.